The following is a 265-amino-acid chain: Zinc transporter ZupT (265 aa).

8 helical membrane-spanning segments follow: residues isoleucine 6–leucine 26, phenylalanine 37–isoleucine 57, tryptophan 77–valine 97, glycine 122–leucine 142, isoleucine 150–alanine 170, phenylalanine 184–leucine 204, phenylalanine 208–isoleucine 228, and cysteine 245–isoleucine 265. Residues asparagine 133 and glutamate 136 each contribute to the Fe(2+) site. Zn(2+) contacts are provided by glutamate 136 and histidine 161. 3 residues coordinate Fe(2+): asparagine 162, glutamate 165, and glutamate 194. Zn(2+) is bound at residue glutamate 165.

This sequence belongs to the ZIP transporter (TC 2.A.5) family. ZupT subfamily.

Its subcellular location is the cell membrane. It catalyses the reaction Zn(2+)(in) = Zn(2+)(out). In terms of biological role, mediates zinc uptake. May also transport other divalent cations. The chain is Zinc transporter ZupT from Corynebacterium aurimucosum (strain ATCC 700975 / DSM 44827 / CIP 107346 / CN-1) (Corynebacterium nigricans).